A 111-amino-acid polypeptide reads, in one-letter code: X antigen family member 2 (111 aa).

Disordered regions lie at residues 1–61 and 77–111; these read MSWR…AAEI and KTGD…KSQV. The segment covering 86–111 has biased composition (basic and acidic residues); sequence TDVKGKILPKAEHFKMPEAGEGKSQV.

The protein belongs to the GAGE family.

This is X antigen family member 2 (XAGE2) from Homo sapiens (Human).